Here is a 134-residue protein sequence, read N- to C-terminus: D-ribose pyranase (134 aa).

H20 (proton donor) is an active-site residue. Residues D28, H99, and 123–125 (FSN) contribute to the substrate site.

The protein belongs to the RbsD / FucU family. RbsD subfamily. Homodecamer.

The protein resides in the cytoplasm. The enzyme catalyses beta-D-ribopyranose = beta-D-ribofuranose. The protein operates within carbohydrate metabolism; D-ribose degradation; D-ribose 5-phosphate from beta-D-ribopyranose: step 1/2. Functionally, catalyzes the interconversion of beta-pyran and beta-furan forms of D-ribose. The chain is D-ribose pyranase from Staphylococcus epidermidis (strain ATCC 12228 / FDA PCI 1200).